The primary structure comprises 311 residues: Thymidylate synthase (311 aa).

DUMP-binding positions include R28 and 172–173 (RR). The active-site Nucleophile is the C192. DUMP contacts are provided by residues 213 to 216 (RSCD), N224, and 254 to 256 (HLY). D216 is a binding site for (6R)-5,10-methylene-5,6,7,8-tetrahydrofolate. A310 is a (6R)-5,10-methylene-5,6,7,8-tetrahydrofolate binding site.

This sequence belongs to the thymidylate synthase family. Bacterial-type ThyA subfamily. As to quaternary structure, homodimer.

It is found in the cytoplasm. It catalyses the reaction dUMP + (6R)-5,10-methylene-5,6,7,8-tetrahydrofolate = 7,8-dihydrofolate + dTMP. Its pathway is pyrimidine metabolism; dTTP biosynthesis. Its function is as follows. Catalyzes the reductive methylation of 2'-deoxyuridine-5'-monophosphate (dUMP) to 2'-deoxythymidine-5'-monophosphate (dTMP) while utilizing 5,10-methylenetetrahydrofolate (mTHF) as the methyl donor and reductant in the reaction, yielding dihydrofolate (DHF) as a by-product. This enzymatic reaction provides an intracellular de novo source of dTMP, an essential precursor for DNA biosynthesis. This Sphingopyxis alaskensis (strain DSM 13593 / LMG 18877 / RB2256) (Sphingomonas alaskensis) protein is Thymidylate synthase.